The following is a 583-amino-acid chain: MKRSMYAGRVRKEHVGQEITLKGWVGRRRGLGGLIFIDLRDREGIMQLVINPESVEAEVMAKAESLRSEFVIEVTGTVVEREQANDNIPTGAVELQVTSLTVLNTAKTTPFEIKDGIEASDDTRLRYRYLDLRRPEMLNNFKLRAAVTHSIRNYLDDLEFIDVETPMLTKSTPEGARDYLVPSRVSKGHFYALPQSPQITKQLLMNAGFDRYYQIVKCFRDEDLRGDRQPEFTQVDLETSFLNEVEIQDIVEGLIAKVLKDTKGIDVTLPFPRMAYDHAMNFYGSDKPDTRFEMLLQDLTELVKEVDFKVFSEAPVVKAIVVKGAADSYSRKDIDKLTDYAKQFGAKGLAWVKVDKGELAGPVAKFLTGITEKLTASLQLEDKDLVLFVADELEVANNTLGALRNRLAKEQGLIDESKFNFLWIVDWPMFEWSEEEGRYMSAHHPFTLPTEETAHHLDGDLAQVRAVAYDIVLNGYELGGGSLRINQKDMQEQMFKALGFSAEDAHEQFGFLLEAMDYGFPPHGGLAIGLDRFVMLLAGEDNIREVIAFPKNNKASDPMTQAPSTVASAQLEELALDITLENE.

Position 174 (Glu174) interacts with L-aspartate. The aspartate stretch occupies residues 198–201 (QITK). Arg220 contributes to the L-aspartate binding site. Residues 220–222 (RDE) and Gln229 contribute to the ATP site. His443 contacts L-aspartate. Glu477 serves as a coordination point for ATP. L-aspartate is bound at residue Arg484. Position 529–532 (529–532 (GLDR)) interacts with ATP.

Belongs to the class-II aminoacyl-tRNA synthetase family. Type 1 subfamily. In terms of assembly, homodimer.

The protein localises to the cytoplasm. The catalysed reaction is tRNA(Asp) + L-aspartate + ATP = L-aspartyl-tRNA(Asp) + AMP + diphosphate. Its function is as follows. Catalyzes the attachment of L-aspartate to tRNA(Asp) in a two-step reaction: L-aspartate is first activated by ATP to form Asp-AMP and then transferred to the acceptor end of tRNA(Asp). This chain is Aspartate--tRNA ligase, found in Streptococcus suis (strain 98HAH33).